A 599-amino-acid chain; its full sequence is Flap endonuclease GEN-like 1 (599 aa).

Positions 1–96 (MGVGGNFWDL…ISRFFRSSGI (96 aa)) are N-domain. The XPG-N domain stretch occupies residues 2–95 (GVGGNFWDLL…RISRFFRSSG (94 aa)). Mg(2+)-binding residues include Asp-31, Asp-75, Glu-140, Glu-142, Asp-161, Asp-163, and Asp-213. The interval 128 to 213 (ELLGIPVLKA…IAISLLVGND (86 aa)) is XPG-I domain. Residues 128 to 217 (ELLGIPVLKA…LLVGNDYDSG (90 aa)) form an I-domain region. The 5'-3' exonuclease domain stretch occupies residues 213–407 (DYDSGGVLGI…LLPMLSTIYL (195 aa)). Disordered stretches follow at residues 522–545 (RESKKKNVSEEETATPRATTMGVQ) and 559–599 (AAGQ…LLFG). Composition is skewed to polar residues over residues 563 to 572 (SIETGGSSKA) and 580 to 590 (ATSTSSSNLTK).

It belongs to the XPG/RAD2 endonuclease family. GEN subfamily. It depends on Mg(2+) as a cofactor.

The protein resides in the nucleus. In terms of biological role, endonuclease which cleaves flap structures at the junction between single-stranded DNA and double-stranded DNA with a specific cleavage site in the 5' overhang strand exactly one nucleotide 3' of the branch point. Structure- and sequence-specific nuclease that resolves holliday junctions (HJs) by symmetrically oriented incisions in two opposing strands near the junction point, thus leading to ligatable products; HJs are physical links between homologous DNA molecules that arise as central intermediary structures during homologous recombination and repair in meiotic and somatic cells. Structure-specific nuclease with 5'-flap endonuclease activity, preferentially cleaving static flaps 5' overhang strand exactly one nucleotide in the 3' direction of the branch point. Also able to cleave double-stranded flap strand 1 exactly at the branch point. The chain is Flap endonuclease GEN-like 1 from Arabidopsis thaliana (Mouse-ear cress).